The sequence spans 255 residues: 5'-nucleotidase SurE (255 aa).

The a divalent metal cation site is built by Asp8, Asp9, Ser40, and Asn93.

This sequence belongs to the SurE nucleotidase family. It depends on a divalent metal cation as a cofactor.

The protein localises to the cytoplasm. The enzyme catalyses a ribonucleoside 5'-phosphate + H2O = a ribonucleoside + phosphate. Functionally, nucleotidase that shows phosphatase activity on nucleoside 5'-monophosphates. This chain is 5'-nucleotidase SurE, found in Rhodopseudomonas palustris (strain ATCC BAA-98 / CGA009).